We begin with the raw amino-acid sequence, 387 residues long: MEQVVIVDAIRTPMGRSKGGAFRNVRAEDLSAHLMRSLLARNPALEAAALDDIYWGCVQQTLEQGFNIARNAALLAEVPHSVPAVTVNRLCGSSMQALHDAARMIMTGDAQAGLVGGVEHMGHVPMSHGVDFHPGLSRNVAKAAGMMGLTAEMLARMHGISREMQDAFAARSHARAWAATQSGAFKNEIIPTGGHDADGVLKQFNYDEVIRPETTVEALATLRPAFDPVSGTVTAGTSSALSDGAAAMLVMSESRARELGLKPRARVRSMAVVGCDPSIMGYGPVPASKLALKKAGLSASDIGVFEMNEAFAAQILPCIKDLGLMEQIDEKINLNGGAIALGHPLGCSGARISTTLLNLMEHKDVQFGLATMCIGLGQGIATVFERV.

Cys91 acts as the Acyl-thioester intermediate in catalysis. Catalysis depends on proton acceptor residues His343 and Cys373.

The protein belongs to the thiolase-like superfamily. Thiolase family. Heterotetramer of two alpha chains (FadB) and two beta chains (FadA).

It localises to the cytoplasm. It carries out the reaction an acyl-CoA + acetyl-CoA = a 3-oxoacyl-CoA + CoA. It participates in lipid metabolism; fatty acid beta-oxidation. In terms of biological role, catalyzes the final step of fatty acid oxidation in which acetyl-CoA is released and the CoA ester of a fatty acid two carbons shorter is formed. The chain is 3-ketoacyl-CoA thiolase from Shigella sonnei (strain Ss046).